The chain runs to 483 residues: Cobyric acid synthase (483 aa).

Residues 251–438 (ALIVAVPMLP…LHGVFSADRF (188 aa)) form the GATase cobBQ-type domain. Cys-333 (nucleophile) is an active-site residue. His-430 is an active-site residue.

Belongs to the CobB/CobQ family. CobQ subfamily.

Its pathway is cofactor biosynthesis; adenosylcobalamin biosynthesis. Catalyzes amidations at positions B, D, E, and G on adenosylcobyrinic A,C-diamide. NH(2) groups are provided by glutamine, and one molecule of ATP is hydrogenolyzed for each amidation. This Brucella suis biovar 1 (strain 1330) protein is Cobyric acid synthase.